We begin with the raw amino-acid sequence, 234 residues long: Ubiquitin domain-containing protein 2 (234 aa).

Residues Met-1–Thr-46 are disordered. Residues His-9 to Gly-21 show a composition bias toward polar residues. Basic and acidic residues predominate over residues Leu-32–Ser-41. In terms of domain architecture, Ubiquitin-like spans Ser-152–Gln-227.

The protein resides in the cytoplasm. This Mus musculus (Mouse) protein is Ubiquitin domain-containing protein 2 (Ubtd2).